Reading from the N-terminus, the 61-residue chain is Small ribosomal subunit protein uS14 (61 aa).

Zn(2+) is bound by residues C24, C27, C40, and C43.

Belongs to the universal ribosomal protein uS14 family. Zinc-binding uS14 subfamily. Part of the 30S ribosomal subunit. Contacts proteins S3 and S10. The cofactor is Zn(2+).

Binds 16S rRNA, required for the assembly of 30S particles and may also be responsible for determining the conformation of the 16S rRNA at the A site. The sequence is that of Small ribosomal subunit protein uS14 from Clostridium kluyveri (strain NBRC 12016).